The following is a 270-amino-acid chain: Bacterial microcompartment shell protein PduB (270 aa).

The segment at 6–18 (LVEQIMAQVIARV) is probable helix that binds cargo to the BMC shell. BMC circularly permuted domains follow at residues 47-152 (EFVG…DRTF) and 154-258 (DVYG…LATL).

The protein belongs to the EutL/PduB family. As to quaternary structure, homotrimerizes to form a pseudohexamer with a central pore. The trimers pack into an array. In terms of processing, in purified BMCs seen as a 28.0 kDa and 25.0 kDa form, both of which have been N-terminally sequenced and whose N-fMet is removed; the smaller form is called PduB'.

Its subcellular location is the bacterial microcompartment. It functions in the pathway polyol metabolism; 1,2-propanediol degradation. In terms of biological role, the two proteins produced are among the major shell proteins of the bacterial microcompartment (BMC) dedicated to 1,2-propanediol (1,2-PD) degradation. Required for structural integrity of BMCs and to mitigate propionaldehyde toxicity. The N-terminal 13 residues are important for correct assembly of the BMC shell. The isolated BMC shell component protein ratio for J:A:B':B:K:T:U is approximately 15:10:7:6:1:1:2. The N-terminus of the long form (PduB) is required for correct formation of BMCs, deletions in the first 37 residues have substantially reduced levels of the major lumen enzymes. May play a major role in binding the enzyme contents to the shell. Its function is as follows. The 1,2-PD-specific bacterial microcompartment (BMC) concentrates low levels of 1,2-PD catabolic enzymes, concentrates volatile reaction intermediates thus enhancing pathway flux and keeps the level of toxic, mutagenic propionaldehyde low. This chain is Bacterial microcompartment shell protein PduB, found in Salmonella typhimurium (strain LT2 / SGSC1412 / ATCC 700720).